The chain runs to 830 residues: Ribosome biogenesis protein ERB1 (830 aa).

Positions 1-142 are disordered; it reads MAPQPLKVGT…NKDLPVDEKL (142 aa). 2 stretches are compositionally biased toward acidic residues: residues 35 to 44 and 52 to 109; these read VSEESDEEFG and MSDD…DSDS. Positions 131-142 are enriched in basic and acidic residues; sequence EENKDLPVDEKL. WD repeat units lie at residues 481–520, 523–563, 660–698, 701–740, 744–783, and 799–830; these read PGDT…EVWR, LHAG…APHI, KTPG…LIRT, SGVK…KPYK, YHNR…DLMQ, and IDGI…LWCS.

The protein belongs to the WD repeat BOP1/ERB1 family. As to quaternary structure, component of the NOP7 complex, composed of ERB1, NOP7 and YTM1. The complex is held together by ERB1, which interacts with NOP7 via its N-terminal domain and with YTM1 via a high-affinity interaction between the seven-bladed beta-propeller domains of the 2 proteins. The NOP7 complex associates with the 66S pre-ribosome.

Its subcellular location is the nucleus. It is found in the nucleolus. It localises to the nucleoplasm. Component of the NOP7 complex, which is required for maturation of the 25S and 5.8S ribosomal RNAs and formation of the 60S ribosome. The polypeptide is Ribosome biogenesis protein ERB1 (Cryptococcus neoformans var. neoformans serotype D (strain JEC21 / ATCC MYA-565) (Filobasidiella neoformans)).